The chain runs to 147 residues: Putative HTH-type transcriptional regulator slr0846 (147 aa).

An HTH rrf2-type domain is found at 2–130; the sequence is KLTTKSHYSV…YSITLADLYY (129 aa).

The chain is Putative HTH-type transcriptional regulator slr0846 from Synechocystis sp. (strain ATCC 27184 / PCC 6803 / Kazusa).